Reading from the N-terminus, the 94-residue chain is Small ribosomal subunit protein uS19 (94 aa).

The protein belongs to the universal ribosomal protein uS19 family.

Its function is as follows. Protein S19 forms a complex with S13 that binds strongly to the 16S ribosomal RNA. In Acidobacterium capsulatum (strain ATCC 51196 / DSM 11244 / BCRC 80197 / JCM 7670 / NBRC 15755 / NCIMB 13165 / 161), this protein is Small ribosomal subunit protein uS19.